We begin with the raw amino-acid sequence, 165 residues long: Growth arrest and DNA damage-inducible protein GADD45 alpha (165 aa).

Phosphothreonine is present on Thr-2.

The protein belongs to the GADD45 family. In terms of assembly, interacts with AURKA, PCNA, GADD45GIP1 and MAPK14.

The protein resides in the nucleus. Its function is as follows. Might affect PCNA interaction with some CDK (cell division protein kinase) complexes; stimulates DNA excision repair in vitro and inhibits entry of cells into S phase. In T-cells, functions as a regulator of p38 MAPKs by inhibiting p88 phosphorylation and activity. The polypeptide is Growth arrest and DNA damage-inducible protein GADD45 alpha (GADD45A) (Bos taurus (Bovine)).